The following is a 141-amino-acid chain: Large ribosomal subunit protein uL11c (141 aa).

Belongs to the universal ribosomal protein uL11 family. In terms of assembly, part of the ribosomal stalk of the 50S ribosomal subunit. Interacts with L10 and the large rRNA to form the base of the stalk. L10 forms an elongated spine to which L12 dimers bind in a sequential fashion forming a multimeric L10(L12)X complex.

The protein resides in the plastid. It is found in the chloroplast. In terms of biological role, forms part of the ribosomal stalk which helps the ribosome interact with GTP-bound translation factors. This Trieres chinensis (Marine centric diatom) protein is Large ribosomal subunit protein uL11c.